Here is a 313-residue protein sequence, read N- to C-terminus: Ribosomal RNA small subunit methyltransferase H (313 aa).

Residues 35 to 37 (GGH), Asp-55, Phe-79, Asp-101, and Gln-108 contribute to the S-adenosyl-L-methionine site.

This sequence belongs to the methyltransferase superfamily. RsmH family.

The protein resides in the cytoplasm. The catalysed reaction is cytidine(1402) in 16S rRNA + S-adenosyl-L-methionine = N(4)-methylcytidine(1402) in 16S rRNA + S-adenosyl-L-homocysteine + H(+). Its function is as follows. Specifically methylates the N4 position of cytidine in position 1402 (C1402) of 16S rRNA. In Edwardsiella ictaluri (strain 93-146), this protein is Ribosomal RNA small subunit methyltransferase H.